We begin with the raw amino-acid sequence, 212 residues long: Maleylacetoacetate isomerase (212 aa).

One can recognise a GST N-terminal domain in the interval 1 to 83 (MKLYTYYRST…YLEERYPQPA (83 aa)). Residues 88–211 (DPLRRARERG…HPANQPDTPA (124 aa)) enclose the GST C-terminal domain.

The protein belongs to the GST superfamily. Zeta family.

It carries out the reaction 4-maleylacetoacetate = 4-fumarylacetoacetate. The protein operates within amino-acid degradation; L-phenylalanine degradation; acetoacetate and fumarate from L-phenylalanine: step 5/6. The sequence is that of Maleylacetoacetate isomerase (maiA) from Pseudomonas aeruginosa (strain ATCC 15692 / DSM 22644 / CIP 104116 / JCM 14847 / LMG 12228 / 1C / PRS 101 / PAO1).